The chain runs to 88 residues: MANTKQAQKRARQAEQRRQHNASQRSMVRTYIKRVIKAIQGGDHAQAMTEFKAAQPVIDRIADKDAISKKKAARIKSRLNKRIKALAA.

Positions M1 to M27 are disordered.

Belongs to the bacterial ribosomal protein bS20 family.

Its function is as follows. Binds directly to 16S ribosomal RNA. The sequence is that of Small ribosomal subunit protein bS20 from Chromohalobacter salexigens (strain ATCC BAA-138 / DSM 3043 / CIP 106854 / NCIMB 13768 / 1H11).